A 557-amino-acid polypeptide reads, in one-letter code: DNA ligase (557 aa).

ATP is bound at residue Glu249. The active-site N6-AMP-lysine intermediate is Lys251. ATP is bound by residues Arg256, Arg271, Glu301, Phe340, Arg417, and Lys423.

Belongs to the ATP-dependent DNA ligase family. Mg(2+) serves as cofactor.

It carries out the reaction ATP + (deoxyribonucleotide)n-3'-hydroxyl + 5'-phospho-(deoxyribonucleotide)m = (deoxyribonucleotide)n+m + AMP + diphosphate.. Its function is as follows. DNA ligase that seals nicks in double-stranded DNA during DNA replication, DNA recombination and DNA repair. The sequence is that of DNA ligase from Methanothermobacter thermautotrophicus (Methanobacterium thermoformicicum).